The chain runs to 513 residues: QWRF motif-containing protein 9 (513 aa).

3 stretches are compositionally biased toward polar residues: residues 1–26 (MTAA…PSES), 43–55 (GTSS…SPKR), and 65–78 (VTPS…PQST). 3 disordered regions span residues 1–89 (MTAA…RREV), 115–144 (GTLE…LSDQ), and 184–293 (VSNR…LRVR). Over residues 79 to 89 (PRRESLDRREV) the composition is skewed to basic and acidic residues. Polar residues-rich tracts occupy residues 202–211 (ESVSSGSSNG) and 244–262 (VDSS…SPRG). The QWRF motif signature appears at 334–337 (QWQF).

It belongs to the QWRF family.

This chain is QWRF motif-containing protein 9 (QWRF9), found in Arabidopsis thaliana (Mouse-ear cress).